The following is a 172-amino-acid chain: Translation initiation factor IF-3 (172 aa).

This sequence belongs to the IF-3 family. Monomer.

It is found in the cytoplasm. IF-3 binds to the 30S ribosomal subunit and shifts the equilibrium between 70S ribosomes and their 50S and 30S subunits in favor of the free subunits, thus enhancing the availability of 30S subunits on which protein synthesis initiation begins. In Lactobacillus johnsonii (strain CNCM I-12250 / La1 / NCC 533), this protein is Translation initiation factor IF-3.